Reading from the N-terminus, the 397-residue chain is Protein EMSY-LIKE 3 (397 aa).

The disordered stretch occupies residues 1 to 40; that stretch reads MDYRPSDSSGTDDDLPPSHQGRYQRNARPTGNGRPSVLNS. One can recognise an ENT domain in the interval 50-137; the sequence is METQIHLIEQ…PQLVHDAPSP (88 aa). Positions 81 to 107 form a coiled coil; it reads ESLITELRKELRVSDEEHRELLSRVNA. Disordered stretches follow at residues 122–221 and 284–330; these read SLQS…SYDP and DPGI…TQNG. Residues 164–174 are compositionally biased toward polar residues; the sequence is LHPSMQPSSSA. Residues 175–182 carry the Nuclear localization signal motif; that stretch reads LRRGGPPP. Positions 363-389 form a coiled coil; it reads AEVEKAKRVLRDHELALMDAIAKLEEI. Ser390 is subject to Phosphoserine.

Its subcellular location is the nucleus. In terms of biological role, probably involved in the regulation of chromatin states. Contributes to basal immunity. The polypeptide is Protein EMSY-LIKE 3 (Arabidopsis thaliana (Mouse-ear cress)).